Reading from the N-terminus, the 584-residue chain is 2-succinyl-5-enolpyruvyl-6-hydroxy-3-cyclohexene-1-carboxylate synthase (584 aa).

This sequence belongs to the TPP enzyme family. MenD subfamily. Homodimer. Requires Mg(2+) as cofactor. It depends on Mn(2+) as a cofactor. The cofactor is thiamine diphosphate.

The enzyme catalyses isochorismate + 2-oxoglutarate + H(+) = 5-enolpyruvoyl-6-hydroxy-2-succinyl-cyclohex-3-ene-1-carboxylate + CO2. Its pathway is quinol/quinone metabolism; 1,4-dihydroxy-2-naphthoate biosynthesis; 1,4-dihydroxy-2-naphthoate from chorismate: step 2/7. The protein operates within quinol/quinone metabolism; menaquinone biosynthesis. In terms of biological role, catalyzes the thiamine diphosphate-dependent decarboxylation of 2-oxoglutarate and the subsequent addition of the resulting succinic semialdehyde-thiamine pyrophosphate anion to isochorismate to yield 2-succinyl-5-enolpyruvyl-6-hydroxy-3-cyclohexene-1-carboxylate (SEPHCHC). This is 2-succinyl-5-enolpyruvyl-6-hydroxy-3-cyclohexene-1-carboxylate synthase from Bacillus cytotoxicus (strain DSM 22905 / CIP 110041 / 391-98 / NVH 391-98).